A 198-amino-acid chain; its full sequence is Transcription factor FapR (198 aa).

The region spanning 102 to 167 is the MaoC-like domain; that stretch reads TRIARGHHLF…HGRTIVEVNS (66 aa).

The protein belongs to the FapR family.

Functionally, transcriptional factor involved in regulation of membrane lipid biosynthesis by repressing genes involved in fatty acid and phospholipid metabolism. This Geobacillus kaustophilus (strain HTA426) protein is Transcription factor FapR.